Reading from the N-terminus, the 37-residue chain is Cytochrome b6-f complex subunit 7 (37 aa).

Residues 11-29 (AILSIVLVLVGLAWGFLLL) traverse the membrane as a helical segment.

This sequence belongs to the PetM family. In terms of assembly, the 4 large subunits of the cytochrome b6-f complex are cytochrome b6, subunit IV (17 kDa polypeptide, PetD), cytochrome f and the Rieske protein, while the 4 small subunits are PetG, PetL, PetM and PetN. The complex functions as a dimer.

Its subcellular location is the cellular thylakoid membrane. Its function is as follows. Component of the cytochrome b6-f complex, which mediates electron transfer between photosystem II (PSII) and photosystem I (PSI), cyclic electron flow around PSI, and state transitions. The chain is Cytochrome b6-f complex subunit 7 from Gloeothece citriformis (strain PCC 7424) (Cyanothece sp. (strain PCC 7424)).